Consider the following 139-residue polypeptide: Holo-[acyl-carrier-protein] synthase (139 aa).

Residues D8 and E57 each coordinate Mg(2+).

This sequence belongs to the P-Pant transferase superfamily. AcpS family. It depends on Mg(2+) as a cofactor.

Its subcellular location is the cytoplasm. It carries out the reaction apo-[ACP] + CoA = holo-[ACP] + adenosine 3',5'-bisphosphate + H(+). In terms of biological role, transfers the 4'-phosphopantetheine moiety from coenzyme A to a Ser of acyl-carrier-protein. This chain is Holo-[acyl-carrier-protein] synthase, found in Sinorhizobium medicae (strain WSM419) (Ensifer medicae).